Here is a 603-residue protein sequence, read N- to C-terminus: Zinc finger protein 415 (603 aa).

Residues 264-286 (YRYIECDKALNHGSHMTVRQVSH) form a C2H2-type 1; degenerate zinc finger. 11 C2H2-type zinc fingers span residues 292–314 (YKCD…WRVH), 320–342 (YKCN…RRVH), 348–370 (YKCY…QKTH), 376–398 (YTCK…QVIH), 404–426 (YKCN…QRIH), 432–454 (YKCN…WRIH), 460–482 (YKCN…RRVH), 488–510 (YKCN…QVIH), 516–538 (YKCN…QVIH), 544–566 (YKCN…QIIH), and 572–594 (YKCS…QIIH).

Expressed in all tissues examined. Isoforms are differentially expressed. Isoform 3 and isoform 5 were highly expressed, isoform 4 moderately expressed, isoform 2 lower expression, the lowest expression level was seem with isoform 1.

The protein resides in the nucleus. The protein localises to the cytoplasm. In terms of biological role, involved in transcriptional regulation. Transcriptional activity differed among the various isoforms. All isoforms except isoform 3 seem to suppresses the transcriptional activities of AP-1 and p53/TP53. This chain is Zinc finger protein 415 (ZNF415), found in Homo sapiens (Human).